The following is a 388-amino-acid chain: Protein DJ-1 homolog D (388 aa).

PfpI endopeptidase domains lie at 5-190 (RTVL…KALG) and 198-383 (KRIL…ALLG). Cysteine 120 functions as the Nucleophile in the catalytic mechanism. Residue cysteine 120 is modified to Cysteine sulfenic acid (-SOH). Residue histidine 121 is part of the active site. The Nucleophile role is filled by cysteine 313. At cysteine 313 the chain carries Cysteine sulfinic acid (-SO2H). The active site involves histidine 314.

Belongs to the peptidase C56 family. As to quaternary structure, homotrimer. In terms of processing, cys-120 and Cys-313 are oxidized to sulfinic acid.

It catalyses the reaction (R)-S-lactoylglutathione = methylglyoxal + glutathione. Possesses glyoxalase I activity. Catalyzes the conversion of hemimercaptal, formed from methylglyoxal and glutathione, to S-lactoylglutathione. May be involved in oxidative stress response. The sequence is that of Protein DJ-1 homolog D (DJ1D) from Arabidopsis thaliana (Mouse-ear cress).